We begin with the raw amino-acid sequence, 155 residues long: Small ribosomal subunit protein uS7c (155 aa).

The protein belongs to the universal ribosomal protein uS7 family. Part of the 30S ribosomal subunit.

The protein localises to the plastid. The protein resides in the chloroplast. In terms of biological role, one of the primary rRNA binding proteins, it binds directly to 16S rRNA where it nucleates assembly of the head domain of the 30S subunit. The sequence is that of Small ribosomal subunit protein uS7c (rps7) from Hydrastis canadensis (Goldenseal).